Here is a 417-residue protein sequence, read N- to C-terminus: Calreticulin (417 aa).

Positions Met1 to Ala17 are cleaved as a signal peptide. Residues Glu18–Glu197 are N-domain. Ca(2+) is bound by residues Gln26, Lys62, and Lys64. Position 64 is an N6-(2-hydroxyisobutyryl)lysine (Lys64). Residues Tyr109, Lys111, Tyr128, and Asp135 each contribute to the an alpha-D-glucoside site. Cys137 and Cys163 are joined by a disulfide. N6-acetyllysine is present on Lys159. Residues Val191 to Phe202 form a 1-1 repeat. Residues Val191–Glu255 are 4 X approximate repeats. Residues Ser193–Pro277 are disordered. The P-domain stretch occupies residues Asp198 to Tyr308. Positions Lys207 to Glu251 are enriched in basic and acidic residues. Residue Lys209 is modified to N6-acetyllysine. 6 consecutive repeat copies span residues Asp210 to Glu221, Asp227 to Lys238, Asp244 to Glu255, Gly259 to Pro269, Gly273 to Pro283, and Gly287 to Pro297. Residues Asp237–Glu270 form an interaction with PPIB region. Acidic residues predominate over residues Asp252 to Trp261. The 3 X approximate repeats stretch occupies residues Gly259–Pro297. The segment at Glu309 to Leu417 is C-domain. An an alpha-D-glucoside-binding site is contributed by Asp317. Residue Asp328 participates in Ca(2+) binding. Residues Thr350–Leu417 are disordered. A compositionally biased stretch (basic and acidic residues) spans Ala352–Glu379. Over residues Glu380–Ala408 the composition is skewed to acidic residues. The Prevents secretion from ER motif lies at Lys414–Leu417.

It belongs to the calreticulin family. Monomer. Component of an EIF2 complex at least composed of CELF1/CUGBP1, CALR, CALR3, EIF2S1, EIF2S2, HSP90B1 and HSPA5. Interacts with PDIA3/ERp57 and SPACA9. Interacts with TRIM21. Interacts with NR3C1. Interacts with PPIB. Interacts (via P-domain) with PDIA5. Interacts with CLCC1. In terms of tissue distribution, in blastocyst expressed in all blastomeres (at protein level). In embryos, expressed in spleen, kidney, liver, fat, muscle, ovary, granulosa cells and cumulus cells.

It is found in the endoplasmic reticulum lumen. The protein localises to the cytoplasm. It localises to the cytosol. Its subcellular location is the secreted. The protein resides in the extracellular space. It is found in the extracellular matrix. The protein localises to the cell surface. It localises to the sarcoplasmic reticulum lumen. Its subcellular location is the cytoplasmic vesicle. The protein resides in the secretory vesicle. It is found in the cortical granule. The protein localises to the cytolytic granule. Its function is as follows. Calcium-binding chaperone that promotes folding, oligomeric assembly and quality control in the endoplasmic reticulum (ER) via the calreticulin/calnexin cycle. This lectin interacts transiently with almost all of the monoglucosylated glycoproteins that are synthesized in the ER. Interacts with the DNA-binding domain of NR3C1 and mediates its nuclear export. Involved in maternal gene expression regulation. May participate in oocyte maturation via the regulation of calcium homeostasis. Present in the cortical granules of non-activated oocytes, is exocytosed during the cortical reaction in response to oocyte activation and might participate in the block to polyspermy. The chain is Calreticulin (CALR) from Sus scrofa (Pig).